A 549-amino-acid chain; its full sequence is Maturase K (549 aa).

This sequence belongs to the intron maturase 2 family. MatK subfamily.

The protein resides in the plastid. It localises to the chloroplast. Functionally, usually encoded in the trnK tRNA gene intron. Probably assists in splicing its own and other chloroplast group II introns. The polypeptide is Maturase K (Albidella oligococca (Caldesia oligococca)).